Here is a 1761-residue protein sequence, read N- to C-terminus: MARHQAVSQLHFFALILESLFKGADHPLSHFHNVSEDELDELWSWNTPLQPELRFCMHEKVSERAALHPEKIAIDAWDGTLTYGQIEDYSDKLAKLLRLLDDSSNRIIPVLFEKSRWTSVAVLAIMKSGACFALLDPAQPEGRLRAVVQQVNAKIFLSSKAQSTLAARVAPAATIIPISKSKFNKIFSPYTAEQPNTTLPPVSPDQPLYIQFTSGSTGVPKGCILTHSQYTSGAIPRAAAVGYYPHSRVLDFASYAFDVCIDSMLCTLAHGATLCTPSDERRMNDMSGAMRDMQVTFAGMTPSVARTLEVDILNNLESIALGGEGVSISDAMSWGQRTRVVNAYGPSEATVGATINDNVAAKPYITMGKRKGCALWLSDPENHNKLVPVGAVGELLIEGPIVGNGYLNNPSKTKEVFIEDPEFLLKGSKSYPGRHGRIYKTGDLVRFDPDGDGEPIFVGRQDQQVKLRGQRIELAEIEFNMQKHLPPDTQLAAEVIKPSGGGEQTLVAFLVEQKKNGMRHLDGNVFGSFTNKFQDALRDMTKQLFVDLPSYMIPSAYIPLWKMPLLVSCKTDRKRLREIGASVTRQDLRRFNSAVSEKKEATTEMELKLQSLWAKLLGGDADFSANDNFFSMGGDSLRAMRLVAAARDEGVVLSVPDIMLNPTLSSMAEKAKPVSAEETSDVPPFSMIAKDWDVDAARQESARLCGVDVANVEDVYPCTPLQEGLIALSAKFQDAYVAQRVATLPAETAVRLKEAFDTAVQGSPILRTRIINVSGRGLFQVVLKDGQLVREYSTEVSEYLRLDRNEPMDLGTALFRYGLVEEPGSDKMNFVITMHHAVYDGWSMPLVFDRVNRAFNGLHTERPSSFKHFIKHLISLDPADAQQYWKERLEGTIPHQFPPLPQKGYTTQADSLLEHYVTVPTSAHSKLTLATIIRGAWALVSSLYMGHPDIVFGETLTGRSAPVPGIEQIEGPMITTVPIRVRLSLDRPIAEYLQKIHAQTVKQIPHEHLGLQNIRRLSKDARVACDLRTGLVLHPKEDEDWGTVDIRNPANTFLPANDAEGAREALKFNTYALMLVCTLEENGFLVMASFDSNCISKEAMERVLAVLDRIVHAFLGNPESKLGDVAVLDPVEAQDAEAMRPRDVMSDSALGMSPVDGPESMDASLKELSPNEEKLRSILGRILGMKETDIRPSDSFFDLGGDSIGAMRLVSDARAQGLNLTVAQVFQSSSLSDLAASASNEREDKLAEILSRILGMAKTDIKSSDSFFELGGDSIGAMRLVSDARAQGLNITVAQVFQSKSLAELASSAEEETPSQPRVDTDAPFIALGKDANLHSPDRVGLYLENQGWEITNIYPTRPLQQLAVEGTVDLPRYSLRYELIKFATPIDRQRLEQACQELVARNEVLRTVFVKDDGLTLGVVLSSLVVPYTETAVPDGEDADAFIQAGIKQDIEAPKPYGSSFVAFNLFTHTNGASTLVFRISHAQYDEICLPILFEQLSALYAGTTVPETVPFSKHINHVVLDNIPKAIPYWKNLLSGSEMTVLKPSIPLTHRGPADIYKEFDISRRPANITIGSLPTAAWALVLSRRLSRTDVVFGEVVSGRNVGAPNADRIFGPTWQYIPFRVAFSKSWSYLDLLRYVQDQHMTSAAYESMGFSEIVKNCTHWDPESVQWFDTVVHQAPAWVEEMPFGNGVEAKFQTLYPHAEPLREWKCQAFVKDGGRKLGIEIVTFEEWIGEAEGVLEEVGKALECLMEGRAGESIF.

Residues 63 to 468 are adenylation; sequence ERAALHPEKI…GRQDQQVKLR (406 aa). One can recognise a Carrier 1 domain in the interval 600 to 675; sequence EATTEMELKL…SMAEKAKPVS (76 aa). S636 is modified (O-(pantetheine 4'-phosphoryl)serine). Positions 712–1135 are condensation 1; sequence VEDVYPCTPL…AVLDPVEAQD (424 aa). Carrier domains lie at 1169–1242 and 1237–1313; these read SPNE…SNER and SASN…EEET. Residues S1203 and S1274 each carry the O-(pantetheine 4'-phosphoryl)serine modification. Positions 1354–1677 are condensation 2; the sequence is IYPTRPLQQL…ESVQWFDTVV (324 aa).

The protein belongs to the NRP synthetase family.

It participates in siderophore biosynthesis. Nonribosomal peptide synthetase; part of the gene cluster that mediates the biosynthesis of hydroxamate-containing siderophores that play a critical role in virulence. Cochliobolus heterostrophus produces extracellular coprogen-type siderophores including coprogen, neocoprogen I and neocoprogen II, as well as the intracellular siderophore ferricrocin. The role of extracellular siderophores is to supply iron to the fungus during plant infection, and the intracellular ferricrocin is required for intracellular iron distribution and storage with a crucial role in ascus and ascospore development. SIDA2 catalyzes the conversion of L-ornithine to N(5)-hydroxyornithine, the first step in the biosynthesis of all hydroxamate-containing siderophores. The assembly of extracellular coprogen-type siderophores is then performed by the nonribosomal peptide synthetase (NRPS) NPS6 whereas the intracellular siderophore ferricrocin is assembled by NPS2. This is Nonribosomal peptide synthetase 6 from Cochliobolus heterostrophus (strain C4 / ATCC 48331 / race T) (Southern corn leaf blight fungus).